Here is an 83-residue protein sequence, read N- to C-terminus: Small ribosomal subunit protein bS16 (83 aa).

This sequence belongs to the bacterial ribosomal protein bS16 family.

The protein is Small ribosomal subunit protein bS16 of Borrelia turicatae (strain 91E135).